Here is a 133-residue protein sequence, read N- to C-terminus: Small ribosomal subunit protein uS8c (133 aa).

Belongs to the universal ribosomal protein uS8 family. As to quaternary structure, part of the 30S ribosomal subunit.

It is found in the plastid. The protein localises to the chloroplast. Functionally, one of the primary rRNA binding proteins, it binds directly to 16S rRNA central domain where it helps coordinate assembly of the platform of the 30S subunit. The protein is Small ribosomal subunit protein uS8c (rps8) of Pyropia yezoensis (Susabi-nori).